Reading from the N-terminus, the 313-residue chain is Ornithine carbamoyltransferase (313 aa).

Carbamoyl phosphate-binding positions include 57 to 60, Arg108, and 135 to 138; these read STRT and HPTQ. Residues Asn167, Asp231, and 235-236 each bind L-ornithine; that span reads SM. Carbamoyl phosphate is bound by residues 272–273 and Arg300; that span reads CL.

This sequence belongs to the aspartate/ornithine carbamoyltransferase superfamily. OTCase family.

The protein resides in the cytoplasm. The enzyme catalyses carbamoyl phosphate + L-ornithine = L-citrulline + phosphate + H(+). The protein operates within amino-acid biosynthesis; L-arginine biosynthesis; L-arginine from L-ornithine and carbamoyl phosphate: step 1/3. Functionally, reversibly catalyzes the transfer of the carbamoyl group from carbamoyl phosphate (CP) to the N(epsilon) atom of ornithine (ORN) to produce L-citrulline. This Thermotoga petrophila (strain ATCC BAA-488 / DSM 13995 / JCM 10881 / RKU-1) protein is Ornithine carbamoyltransferase.